Reading from the N-terminus, the 245-residue chain is 5-oxoprolinase subunit A (245 aa).

This sequence belongs to the LamB/PxpA family. In terms of assembly, forms a complex composed of PxpA, PxpB and PxpC.

It carries out the reaction 5-oxo-L-proline + ATP + 2 H2O = L-glutamate + ADP + phosphate + H(+). Its function is as follows. Catalyzes the cleavage of 5-oxoproline to form L-glutamate coupled to the hydrolysis of ATP to ADP and inorganic phosphate. The chain is 5-oxoprolinase subunit A from Chromobacterium violaceum (strain ATCC 12472 / DSM 30191 / JCM 1249 / CCUG 213 / NBRC 12614 / NCIMB 9131 / NCTC 9757 / MK).